A 204-amino-acid chain; its full sequence is MSRYTGPKWRLSRRLGISLSGSGKELARRPYAPGDHGNTGRRPKLSEYATQLREKQKLRFTYGLSERQFHNLFLKAGKIRKGLHGTNFFILLETRLDSVVFRLGLASTRPQARQLVNHGHILVDGKRVTIPSYEVKPGQIISVRERSKKIVPILNSVEASLNNTPFVEFDADKLEGKLTRYPEREELGADINESLIVEYYNRLG.

A disordered region spans residues 22 to 43 (SGKELARRPYAPGDHGNTGRRP). An S4 RNA-binding domain is found at 94 to 154 (TRLDSVVFRL…ERSKKIVPIL (61 aa)).

This sequence belongs to the universal ribosomal protein uS4 family. As to quaternary structure, part of the 30S ribosomal subunit. Contacts protein S5. The interaction surface between S4 and S5 is involved in control of translational fidelity.

Its function is as follows. One of the primary rRNA binding proteins, it binds directly to 16S rRNA where it nucleates assembly of the body of the 30S subunit. Functionally, with S5 and S12 plays an important role in translational accuracy. The sequence is that of Small ribosomal subunit protein uS4 from Oenococcus oeni (strain ATCC BAA-331 / PSU-1).